Consider the following 316-residue polypeptide: Transaldolase 1 (316 aa).

Lys-131 (schiff-base intermediate with substrate) is an active-site residue.

This sequence belongs to the transaldolase family. Type 1 subfamily. Homodimer.

The protein localises to the cytoplasm. It carries out the reaction D-sedoheptulose 7-phosphate + D-glyceraldehyde 3-phosphate = D-erythrose 4-phosphate + beta-D-fructose 6-phosphate. It functions in the pathway carbohydrate degradation; pentose phosphate pathway; D-glyceraldehyde 3-phosphate and beta-D-fructose 6-phosphate from D-ribose 5-phosphate and D-xylulose 5-phosphate (non-oxidative stage): step 2/3. Functionally, transaldolase is important for the balance of metabolites in the pentose-phosphate pathway. This Pectobacterium atrosepticum (strain SCRI 1043 / ATCC BAA-672) (Erwinia carotovora subsp. atroseptica) protein is Transaldolase 1.